The following is a 276-amino-acid chain: Ubiquinone biosynthesis protein coq11, mitochondrial (276 aa).

It belongs to the NAD(P)-dependent epimerase/dehydratase family.

The protein resides in the mitochondrion. Its function is as follows. Acts in the coenzyme Q biosynthetic pathway. This chain is Ubiquinone biosynthesis protein coq11, mitochondrial, found in Schizosaccharomyces pombe (strain 972 / ATCC 24843) (Fission yeast).